The chain runs to 1083 residues: Solute carrier family 12 member 7 (1083 aa).

Residues 1-52 form a disordered region; the sequence is MPTNFTVVPVEAHADGGGDETAERTEAPGTPEGPEPERPSPGDGNPRENSPF. The Cytoplasmic portion of the chain corresponds to 1–119; it reads MPTNFTVVPV…RREAKAPRMG (119 aa). Residues 12–26 are compositionally biased toward basic and acidic residues; that stretch reads AHADGGGDETAERTE. Threonine 30 carries the post-translational modification Phosphothreonine. 2 positions are modified to phosphoserine: serine 50 and serine 62. A discontinuously helical membrane pass occupies residues 120-142; that stretch reads TFIGVYLPCLQNILGVILFLRLT. Residues asparagine 131 and isoleucine 132 each coordinate K(+). Valine 135 is a binding site for chloride. Over 143 to 149 the chain is Extracellular; that stretch reads WIVGVAG. Residues 150-172 form a helical membrane-spanning segment; sequence VLESFLIVAMCCTCTMLTAISMS. Over 173 to 196 the chain is Cytoplasmic; it reads AIATNGVVPAGGSYYMISRSLGPE. Residues 197–225 traverse the membrane as a helical segment; sequence FGGAVGLCFYLGTTFAGAMYILGTIEIFL. Topologically, residues 226–249 are extracellular; that stretch reads TYISPGAAIFQAEAAGGEAAAMLH. 2 helical membrane-spanning segments follow: residues 250 to 270 and 272 to 300; these read NMRV…FVGV and YVNK…KSAF. Topologically, residues 301 to 419 are extracellular; it reads DPPDIPVCLL…PYVLTDIAAS (119 aa). 2 cysteine pairs are disulfide-bonded: cysteine 308/cysteine 323 and cysteine 343/cysteine 352. Asparagine 312 carries an N-linked (GlcNAc...) asparagine glycan. Asparagine 360 is a glycosylation site (N-linked (GlcNAc...) asparagine). The chain crosses the membrane as a helical span at residues 420-440; it reads FTLLVGIYFPSVTGIMAGSNR. Proline 429 and threonine 432 together coordinate K(+). Proline 429 lines the chloride pocket. Chloride-binding residues include glycine 433 and isoleucine 434. Topologically, residues 441 to 450 are cytoplasmic; sequence SGDLKDAQKS. Residues 451–473 form a helical membrane-spanning segment; that stretch reads IPTGTILAIVTTSFIYLSCIVLF. Residues 474–504 are Extracellular-facing; that stretch reads GACIEGVVLRDKFGEALQGNLVIGMLAWPSP. The helical transmembrane segment at 505–531 threads the bilayer; sequence WVIVIGSFFSTCGAGLQSLTGAPRLLQ. Residues 532–554 are Cytoplasmic-facing; it reads AIARDGIVPFLQVFGHGKANGEP. A run of 2 helical transmembrane segments spans residues 555 to 571 and 574 to 598; these read TWAL…GILI and LDSV…ACAV. Tyrosine 589 lines the chloride pocket. At 599-612 the chain is on the cytoplasmic side; sequence QTLLRTPNWRPRFK. The next 2 helical transmembrane spans lie at 613–632 and 636–651; these read FYHW…LMFI and YYAL…IYKY. Topologically, residues 652–1083 are cytoplasmic; it reads IEYRGAEKEW…GGREVITIYS (432 aa). Residues 664 to 680 are scissor helix; it reads GIRGLSLNAARYALLRV. A phosphothreonine mark is found at threonine 973 and threonine 980.

The protein belongs to the SLC12A transporter family. K/Cl co-transporter subfamily. Homodimer; adopts a domain-swap conformation at the scissor helices connecting the transmembrane domain and C-terminal domain. Heterodimer with K-Cl cotransporter SLC12A5. In terms of tissue distribution, detected in muscle, brain, lung, heart and kidney.

It localises to the cell membrane. The catalysed reaction is K(+)(in) + chloride(in) = K(+)(out) + chloride(out). Its activity is regulated as follows. Activated by N-ethylmaleimide (NEM). Inhibited by furosemide, DIDS and bumetanide. The inhibition is much stronger in the presence of 50 mM K(+) in the uptake medium. Inhibited by DIOA. Inhibited by WNK3. Functionally, mediates electroneutral potassium-chloride cotransport when activated by cell swelling. May mediate K(+) uptake into Deiters' cells in the cochlea and contribute to K(+) recycling in the inner ear. Important for the survival of cochlear outer and inner hair cells and the maintenance of the organ of Corti. May be required for basolateral Cl(-) extrusion in the kidney and contribute to renal acidification. This is Solute carrier family 12 member 7 from Homo sapiens (Human).